The sequence spans 173 residues: Nicotinamide-nucleotide adenylyltransferase (173 aa).

This sequence belongs to the archaeal NMN adenylyltransferase family.

Its subcellular location is the cytoplasm. It carries out the reaction beta-nicotinamide D-ribonucleotide + ATP + H(+) = diphosphate + NAD(+). The protein operates within cofactor biosynthesis; NAD(+) biosynthesis; NAD(+) from nicotinamide D-ribonucleotide: step 1/1. The polypeptide is Nicotinamide-nucleotide adenylyltransferase (ffdC) (Methanolobus tindarius).